We begin with the raw amino-acid sequence, 451 residues long: Zinc finger MYND domain-containing protein 10 homolog (451 aa).

Zn(2+) is bound by residues Cys-412, Cys-415, Cys-423, Cys-426, Cys-432, Cys-436, His-444, and Cys-448. The MYND-type zinc finger occupies 412–448 (CATCQAKAKKKCACCKKVHYCSRDCQLKDWPQHKLVC).

Belongs to the ZMYND10 family. In terms of tissue distribution, specifically expressed in cells with flagella and motile cilia: chordotonal sensory neurons and sperm.

It localises to the cytoplasm. The protein resides in the cell projection. The protein localises to the cilium. It is found in the dynein axonemal particle. Plays a role in axonemal structure organization and motility. May be involved in axonemal pre-assembly of inner and outer dynein arms (IDA and ODA, respectively) for proper axoneme building for cilia motility. In Drosophila melanogaster (Fruit fly), this protein is Zinc finger MYND domain-containing protein 10 homolog.